Consider the following 1183-residue polypeptide: Formin-like protein (1183 aa).

Disordered regions lie at residues 1–44 (MGAV…SISS) and 63–82 (QHVR…PTTD). Basic residues predominate over residues 23–36 (PHSHAHHHSMRNGH). Over residues 63 to 79 (QHVRQPSLRSRSQQPMP) the composition is skewed to polar residues. A GBD/FH3 domain is found at 76-559 (QPMPTTDELD…HNEQELKKRD (484 aa)). A Phosphoserine modification is found at serine 225. A compositionally biased stretch (polar residues) spans 572–584 (LSRSLPRSASSGD). The segment at 572–681 (LSRSLPRSAS…PPVAGFMPAP (110 aa)) is disordered. Pro residues-rich tracts occupy residues 605 to 614 (LPPPPPPMPA) and 622 to 640 (APPP…PPGF). Over residues 641–654 (SPLGSPSGSLASTA) the composition is skewed to low complexity. Residues 687-1088 (IKRKVPTKYK…AALAASKKEN (402 aa)) form the FH2 domain. In terms of domain architecture, DAD spans 1136 to 1169 (DEVYNGALEDILLGLKSEPYRRADAVRRSQRRRI).

It belongs to the formin homology family. In terms of assembly, self-associates. Interacts (via GBD/FH3 domain) with Cdc42; the interaction is stronger with the GTP bound form of Cdc42.

Functionally, together with Cdc42, involved in establishment of planar cell polarity in the developing compound eye by contributing to ommatidial rotation. Together with DAAM and Cdc42, has a role in neuronal development of mushroom bodies. This is Formin-like protein from Drosophila melanogaster (Fruit fly).